A 253-amino-acid polypeptide reads, in one-letter code: Imidazole glycerol phosphate synthase subunit HisF (253 aa).

Catalysis depends on residues Asp-12 and Asp-131.

It belongs to the HisA/HisF family. In terms of assembly, heterodimer of HisH and HisF.

The protein localises to the cytoplasm. It carries out the reaction 5-[(5-phospho-1-deoxy-D-ribulos-1-ylimino)methylamino]-1-(5-phospho-beta-D-ribosyl)imidazole-4-carboxamide + L-glutamine = D-erythro-1-(imidazol-4-yl)glycerol 3-phosphate + 5-amino-1-(5-phospho-beta-D-ribosyl)imidazole-4-carboxamide + L-glutamate + H(+). The protein operates within amino-acid biosynthesis; L-histidine biosynthesis; L-histidine from 5-phospho-alpha-D-ribose 1-diphosphate: step 5/9. IGPS catalyzes the conversion of PRFAR and glutamine to IGP, AICAR and glutamate. The HisF subunit catalyzes the cyclization activity that produces IGP and AICAR from PRFAR using the ammonia provided by the HisH subunit. The chain is Imidazole glycerol phosphate synthase subunit HisF from Corynebacterium urealyticum (strain ATCC 43042 / DSM 7109).